A 421-amino-acid polypeptide reads, in one-letter code: Magnesium transporter MRS2-5 (421 aa).

Helical transmembrane passes span 357 to 377 (LLLT…AVFG) and 393 to 413 (YVLL…VLYF). The Required for magnesium transport activity signature appears at 377 to 379 (GMN).

Belongs to the CorA metal ion transporter (MIT) (TC 1.A.35.5) family. Expressed in the whole plant.

Its subcellular location is the membrane. Functionally, magnesium transporter that may mediate the influx of magnesium. This is Magnesium transporter MRS2-5 (MRS2-5) from Arabidopsis thaliana (Mouse-ear cress).